A 540-amino-acid polypeptide reads, in one-letter code: 2-isopropylmalate synthase (540 aa).

Residues 8–271 (VLIFDTTLRD…NPFFGRESDS (264 aa)) enclose the Pyruvate carboxyltransferase domain. Residues D17, H208, H210, and N244 each coordinate Mn(2+). The tract at residues 408–540 (QLRLVQVSCG…AVLADRRPGI (133 aa)) is regulatory domain.

This sequence belongs to the alpha-IPM synthase/homocitrate synthase family. LeuA type 1 subfamily. In terms of assembly, homodimer. Mn(2+) serves as cofactor.

It is found in the cytoplasm. It catalyses the reaction 3-methyl-2-oxobutanoate + acetyl-CoA + H2O = (2S)-2-isopropylmalate + CoA + H(+). The protein operates within amino-acid biosynthesis; L-leucine biosynthesis; L-leucine from 3-methyl-2-oxobutanoate: step 1/4. In terms of biological role, catalyzes the condensation of the acetyl group of acetyl-CoA with 3-methyl-2-oxobutanoate (2-ketoisovalerate) to form 3-carboxy-3-hydroxy-4-methylpentanoate (2-isopropylmalate). The sequence is that of 2-isopropylmalate synthase from Prochlorococcus marinus (strain MIT 9303).